The sequence spans 122 residues: uncharacterized protein (122 aa).

The N-terminal stretch at 1 to 20 (MGFHFCIWIIFLLPPPCKKC) is a signal peptide.

It localises to the secreted. This is an uncharacterized protein from Homo sapiens (Human).